The primary structure comprises 574 residues: Septation ring formation regulator EzrA (574 aa).

The Extracellular segment spans residues 1–7 (MSSGIIL). Residues 8–26 (LIVAIVLLVIIAYLVGVII) traverse the membrane as a helical segment. Residues 27–574 (RKRNDTLITS…YEKTRERIRF (548 aa)) lie on the Cytoplasmic side of the membrane. 4 coiled-coil regions span residues 102-131 (NFIR…REAL), 161-190 (ENED…FVAL), 276-379 (VTLD…QQEK), and 459-493 (QLEA…NLEE).

Belongs to the EzrA family.

It localises to the cell membrane. Negative regulator of FtsZ ring formation; modulates the frequency and position of FtsZ ring formation. Inhibits FtsZ ring formation at polar sites. Interacts either with FtsZ or with one of its binding partners to promote depolymerization. This chain is Septation ring formation regulator EzrA, found in Streptococcus equi subsp. zooepidemicus (strain H70).